The chain runs to 359 residues: Histidinol-phosphate aminotransferase (359 aa).

Lys-212 carries the post-translational modification N6-(pyridoxal phosphate)lysine.

The protein belongs to the class-II pyridoxal-phosphate-dependent aminotransferase family. Histidinol-phosphate aminotransferase subfamily. As to quaternary structure, homodimer. Pyridoxal 5'-phosphate serves as cofactor.

The enzyme catalyses L-histidinol phosphate + 2-oxoglutarate = 3-(imidazol-4-yl)-2-oxopropyl phosphate + L-glutamate. Its pathway is amino-acid biosynthesis; L-histidine biosynthesis; L-histidine from 5-phospho-alpha-D-ribose 1-diphosphate: step 7/9. The protein is Histidinol-phosphate aminotransferase of Buchnera aphidicola subsp. Schlechtendalia chinensis.